Here is a 346-residue protein sequence, read N- to C-terminus: Methylthioribose-1-phosphate isomerase (346 aa).

Residues 46–48 (RGA), arginine 89, and glutamine 196 each bind substrate. The Proton donor role is filled by aspartate 237. 247–248 (NK) is a substrate binding site.

It belongs to the eIF-2B alpha/beta/delta subunits family. MtnA subfamily.

It catalyses the reaction 5-(methylsulfanyl)-alpha-D-ribose 1-phosphate = 5-(methylsulfanyl)-D-ribulose 1-phosphate. It participates in amino-acid biosynthesis; L-methionine biosynthesis via salvage pathway; L-methionine from S-methyl-5-thio-alpha-D-ribose 1-phosphate: step 1/6. Its function is as follows. Catalyzes the interconversion of methylthioribose-1-phosphate (MTR-1-P) into methylthioribulose-1-phosphate (MTRu-1-P). The polypeptide is Methylthioribose-1-phosphate isomerase (Geobacter sulfurreducens (strain ATCC 51573 / DSM 12127 / PCA)).